A 292-amino-acid polypeptide reads, in one-letter code: NAD kinase (292 aa).

Aspartate 64 serves as the catalytic Proton acceptor. Residues 64–65, 138–139, arginine 149, arginine 166, aspartate 168, 179–184, and glutamine 238 each bind NAD(+); these read DG, ND, and TGYAVS.

Belongs to the NAD kinase family. A divalent metal cation serves as cofactor.

It is found in the cytoplasm. The catalysed reaction is NAD(+) + ATP = ADP + NADP(+) + H(+). Involved in the regulation of the intracellular balance of NAD and NADP, and is a key enzyme in the biosynthesis of NADP. Catalyzes specifically the phosphorylation on 2'-hydroxyl of the adenosine moiety of NAD to yield NADP. The polypeptide is NAD kinase (Oleidesulfovibrio alaskensis (strain ATCC BAA-1058 / DSM 17464 / G20) (Desulfovibrio alaskensis)).